The chain runs to 273 residues: Imidazole glycerol phosphate synthase subunit HisF (273 aa).

Residues aspartate 11 and aspartate 134 contribute to the active site.

This sequence belongs to the HisA/HisF family. As to quaternary structure, heterodimer of HisH and HisF.

Its subcellular location is the cytoplasm. It catalyses the reaction 5-[(5-phospho-1-deoxy-D-ribulos-1-ylimino)methylamino]-1-(5-phospho-beta-D-ribosyl)imidazole-4-carboxamide + L-glutamine = D-erythro-1-(imidazol-4-yl)glycerol 3-phosphate + 5-amino-1-(5-phospho-beta-D-ribosyl)imidazole-4-carboxamide + L-glutamate + H(+). The protein operates within amino-acid biosynthesis; L-histidine biosynthesis; L-histidine from 5-phospho-alpha-D-ribose 1-diphosphate: step 5/9. IGPS catalyzes the conversion of PRFAR and glutamine to IGP, AICAR and glutamate. The HisF subunit catalyzes the cyclization activity that produces IGP and AICAR from PRFAR using the ammonia provided by the HisH subunit. This is Imidazole glycerol phosphate synthase subunit HisF from Methanococcoides burtonii (strain DSM 6242 / NBRC 107633 / OCM 468 / ACE-M).